The sequence spans 574 residues: MLNLFRNRKRNGAGPTIKKAQKMPELDDFLSNQDYEGAISLLNHKLKAGNLDREEEDSLQLWLAHCYYRLRNYEEAANVYTFLMNKDDAPAELGVYLACCKFYLKQYIEAKSIAEKCPKTPLCIRLMMNVSLRLNDEKRILTFHSSLGDTLEDRLSLAGVNYSRMHYQDAIEVYTSVLQTSPNLIGLNVNMALCYAKMDYPHVAYNLIKNYLRNFPNSPFAKNLLLSVLYRTITSKTTVDEKSELARNIDQEGLTMVSDMEALLKQKLYPEIEYICKHNLVLFKNCETALQVLPSLMKHIPEARVNLILYHLNKNNVKDAISLCKDFDPVTPYEFLVKALTFLRHGQETNSREHLKIAENFFQMVGESGLVQDTIAGRQSSAAYLFLSFKFDDVITYLKSIEAYFTNNDDFLLNLAQAYLMYKNYVAAEKLFIRVSGPERDKILYKSMLARCYVRNKKPQSAWDMMLKTNNPSDRMSLLKVIAQDCYIANEFYYASKAFHEIEISDPTTENWSGKRGACAGLFRQLANHKTDPILISQMREVVHLVAMKPHSNCEFLLKVVRNWAETHNVNIIN.

TPR repeat units follow at residues 20-52 (AQKM…GNLD), 57-90 (DSLQ…DDAP), and 151-184 (LEDR…SPNL).

It belongs to the IFT56 family. As to quaternary structure, component of the IFT complex B composed of at least che-2, che-13, dyf-1, dyf-3, dyf-6, dyf-11, dyf-13, ift-20, ift-74, ift-81, ifta-2, osm-1, osm-5 and osm-6.

It is found in the cell projection. The protein localises to the cilium. Its function is as follows. Component of the intraflagellar transport (IFT) complex B required for transport of proteins in the motile cilium. May be required for ciliary entrance and transport of specific ciliary cargo proteins such as che-3 which are related to motility. The sequence is that of Intraflagellar transport protein 56 homolog from Caenorhabditis elegans.